A 924-amino-acid chain; its full sequence is Periplasmic nitrate reductase (924 aa).

The tat-type signal signal peptide spans 1 to 30 (MNRRDFIKNTAIASAASVAGLSVPSSMLGA). The 4Fe-4S Mo/W bis-MGD-type domain occupies 35 to 91 (WKWDKAVCRFCGTGCGIMIARKDGKIVATKGDPAAPVNRGLNCIKGYFNAKIMYGED). Residues Cys42, Cys45, Cys49, and Cys77 each coordinate [4Fe-4S] cluster. Residues Lys79, Gln147, Asn172, Cys176, 209–216 (WGANMAEM), Met417, Gln421, Asn527, 552–553 (SD), Lys575, Asp602, and 814–823 (TGRVLEHWHS) contribute to the Mo-bis(molybdopterin guanine dinucleotide) site. Substrate is bound at residue Trp890. Residues Asn898 and Lys915 each contribute to the Mo-bis(molybdopterin guanine dinucleotide) site.

Belongs to the prokaryotic molybdopterin-containing oxidoreductase family. NasA/NapA/NarB subfamily. In terms of assembly, component of the periplasmic nitrate reductase NapAB complex composed of NapA and NapB. [4Fe-4S] cluster serves as cofactor. The cofactor is Mo-bis(molybdopterin guanine dinucleotide). Post-translationally, predicted to be exported by the Tat system. The position of the signal peptide cleavage has not been experimentally proven.

Its subcellular location is the periplasm. The catalysed reaction is 2 Fe(II)-[cytochrome] + nitrate + 2 H(+) = 2 Fe(III)-[cytochrome] + nitrite + H2O. In terms of biological role, catalytic subunit of the periplasmic nitrate reductase complex NapAB. Receives electrons from NapB and catalyzes the reduction of nitrate to nitrite. This chain is Periplasmic nitrate reductase, found in Campylobacter jejuni subsp. jejuni serotype O:6 (strain 81116 / NCTC 11828).